We begin with the raw amino-acid sequence, 768 residues long: Pentatricopeptide repeat-containing protein At3g53360, mitochondrial (768 aa).

A mitochondrion-targeting transit peptide spans 1 to 70 (MATMLRLGAR…SSFKIRLRTY (70 aa)). 18 PPR repeats span residues 30-60 (TEELMNDHINSLCKSNFYREALEAFDFAQKN), 66-100 (RLRTYISLICACSSSRSLAQGRKIHDHILNSNCKY), 101-131 (DTILNNHILSMYGKCGSLRDAREVFDFMPER), 132-166 (NLVSYTSVITGYSQNGQGAEAIRLYLKMLQEDLVP), 167-201 (DQFAFGSIIKACASSSDVGLGKQLHAQVIKLESSS), 202-232 (HLIAQNALIAMYVRFNQMSDASRVFYGIPMK), 233-267 (DLISWSSIIAGFSQLGFEFEALSHLKEMLSFGVFH), 269-303 (NEYIFGSSLKACSSLLRPDYGSQIHGLCIKSELAG), 304-334 (NAIAGCSLCDMYARCGFLNSARRVFDQIERP), 335-369 (DTASWNVIIAGLANNGYADEAVSVFSQMRSSGFIP), 370-404 (DAISLRSLLCAQTKPMALSQGMQIHSYIIKWGFLA), 405-435 (DLTVCNSLLTMYTFCSDLYCCFNLFEDFRNN), 437-471 (DSVSWNTILTACLQHEQPVEMLRLFKLMLVSECEP), 472-506 (DHITMGNLLRGCVEISSLKLGSQVHCYSLKTGLAP), 507-537 (EQFIKNGLIDMYAKCGSLGQARRIFDSMDNR), 538-572 (DVVSWSTLIVGYAQSGFGEEALILFKEMKSAGIEP), 573-608 (NHVTFVGVLTACSHVGLVEEGLKLYATMQTEHGISP), and 609-639 (TKEHCSCVVDLLARAGRLNEAERFIDEMKLE). A type E motif region spans residues 644–719 (VWKTLLSACK…IPGQSWIEIE (76 aa)). A type E(+) motif region spans residues 720 to 750 (DKIHIFFAEDIFHPERDDIYTVLHNIWSQML).

This sequence belongs to the PPR family. PCMP-E subfamily.

Its subcellular location is the mitochondrion. This chain is Pentatricopeptide repeat-containing protein At3g53360, mitochondrial (PCMP-E86), found in Arabidopsis thaliana (Mouse-ear cress).